The chain runs to 247 residues: Protein AC124 (247 aa).

The protein resides in the host cytoplasm. It localises to the host nucleus. Accelerates mortality in insect larvae. The protein is Protein AC124 of Lepidoptera (butterflies and moths).